We begin with the raw amino-acid sequence, 170 residues long: Adenine phosphoribosyltransferase (170 aa).

The protein belongs to the purine/pyrimidine phosphoribosyltransferase family. In terms of assembly, homodimer.

Its subcellular location is the cytoplasm. It catalyses the reaction AMP + diphosphate = 5-phospho-alpha-D-ribose 1-diphosphate + adenine. It functions in the pathway purine metabolism; AMP biosynthesis via salvage pathway; AMP from adenine: step 1/1. In terms of biological role, catalyzes a salvage reaction resulting in the formation of AMP, that is energically less costly than de novo synthesis. This Geobacillus kaustophilus (strain HTA426) protein is Adenine phosphoribosyltransferase.